The chain runs to 601 residues: MKKIFITLLWLLFISSFLCSSSSAEDDVLCLQGLKNSLIDPSSRLSSWSFPNSSASSICKLTGVSCWNEKENRIISLQLQSMQLAGEIPESLKLCRSLQSLDLSGNDLSGSIPSQICSWLPYLVTLDLSGNKLGGSIPTQIVECKFLNALILSDNKLSGSIPSQLSRLDRLRRLSLAGNDLSGTIPSELARFGGDDFSGNNGLCGKPLSRCGALNGRNLSIIIVAGVLGAVGSLCVGLVIFWWFFIREGSRKKKGYGAGKSKDDSDWIGLLRSHKLVQVTLFQKPIVKIKLGDLMAATNNFSSGNIDVSSRTGVSYKADLPDGSALAVKRLSACGFGEKQFRSEMNKLGELRHPNLVPLLGYCVVEDERLLVYKHMVNGTLFSQLHNGGLCDAVLDWPTRRAIGVGAAKGLAWLHHGCQPPYLHQFISSNVILLDDDFDARITDYGLAKLVGSRDSNDSSFNNGDLGELGYVAPEYSSTMVASLKGDVYGFGIVLLELVTGQKPLSVINGVEGFKGSLVDWVSQYLGTGRSKDAIDRSICDKGHDEEILQFLKIACSCVVSRPKERPTMIQVYESLKNMADKHGVSEHYDEFPLVFNKQEA.

An N-terminal signal peptide occupies residues 1–24 (MKKIFITLLWLLFISSFLCSSSSA). Asn-52 carries N-linked (GlcNAc...) asparagine glycosylation. LRR repeat units lie at residues 73 to 95 (RIISLQLQSMQLAGEIPESLKLC), 97 to 119 (SLQSLDLSGNDLSGSIPSQICSW), 122 to 144 (YLVTLDLSGNKLGGSIPTQIVEC), 146 to 169 (FLNALILSDNKLSGSIPSQLSRLD), and 170 to 192 (RLRRLSLAGNDLSGTIPSELARF). A helical transmembrane segment spans residues 221–241 (IIIVAGVLGAVGSLCVGLVIF). Thr-298 carries the post-translational modification Phosphothreonine. Residues 301-586 (FSSGNIDVSS…KNMADKHGVS (286 aa)) enclose the Protein kinase domain. Residues 307–315 (DVSSRTGVS) and Lys-329 contribute to the ATP site. Ser-383 carries the post-translational modification Phosphoserine. Thr-399 carries the post-translational modification Phosphothreonine. Phosphotyrosine is present on Tyr-476. Ser-478 is subject to Phosphoserine. The residue at position 479 (Thr-479) is a Phosphothreonine. 2 positions are modified to phosphoserine: Ser-483 and Ser-586.

It belongs to the protein kinase superfamily. Ser/Thr protein kinase family.

The protein resides in the membrane. The sequence is that of Probable inactive receptor kinase At1g27190 from Arabidopsis thaliana (Mouse-ear cress).